The following is a 209-amino-acid chain: Large ribosomal subunit protein uL3 (209 aa).

Residue Q150 is modified to N5-methylglutamine.

This sequence belongs to the universal ribosomal protein uL3 family. In terms of assembly, part of the 50S ribosomal subunit. Forms a cluster with proteins L14 and L19. Post-translationally, methylated by PrmB.

Its function is as follows. One of the primary rRNA binding proteins, it binds directly near the 3'-end of the 23S rRNA, where it nucleates assembly of the 50S subunit. This is Large ribosomal subunit protein uL3 from Aliivibrio fischeri (strain MJ11) (Vibrio fischeri).